A 640-amino-acid chain; its full sequence is (Z)-beta-ocimene synthase TPS13PK, chloroplastic (640 aa).

The N-terminal 95 residues, 1–95 (MAALVSTVSS…PFKDEAYVKR (95 aa)), are a transit peptide targeting the chloroplast. The disordered stretch occupies residues 50-69 (MSTNNNNNNNQKNSSRRSAN). Residues 60–69 (QKNSSRRSAN) show a composition bias toward polar residues. (2E)-geranyl diphosphate contacts are provided by arginine 334, aspartate 371, aspartate 375, arginine 515, and aspartate 518. 2 residues coordinate Mg(2+): aspartate 371 and aspartate 375. A DDXXD motif motif is present at residues 371-375 (DDIYD). Aspartate 518, threonine 522, and glutamate 526 together coordinate Mg(2+).

This sequence belongs to the terpene synthase family. As to quaternary structure, monomer. It depends on Mg(2+) as a cofactor.

It is found in the plastid. It localises to the chloroplast. It catalyses the reaction (2E)-geranyl diphosphate = (Z)-beta-ocimene + diphosphate. Its pathway is secondary metabolite biosynthesis; terpenoid biosynthesis. In terms of biological role, involved in monoterpene (C10) olefins biosynthesis, constituants of cannabinoids and terpenoids-rich resins. Catalyzes mainly the conversion of (2E)-geranyl diphosphate to (Z)-beta-ocimene. This chain is (Z)-beta-ocimene synthase TPS13PK, chloroplastic, found in Cannabis sativa (Hemp).